The primary structure comprises 1846 residues: Peripheral-type benzodiazepine receptor-associated protein 1 (1846 aa).

Disordered stretches follow at residues 57-97 (EESS…GYSC), 281-318 (NQRE…DDVE), and 560-628 (GPKD…SEVE). Positions 576 to 587 (PKSSEPALTTLT) are enriched in polar residues. Residues 599 to 612 (SLSNSSRSESIHNS) are compositionally biased toward low complexity. An SH3 1 domain is found at 649–716 (ARIQVFLARY…PSNFVERVSD (68 aa)). The tract at residues 726 to 785 (ELADSSHSSGPELSFLSGGGGGCSSGGQSSGGRSQPRPEEEAAGDELSLSPPPEGLGEPL) is disordered. Residues 742–755 (SGGGGGCSSGGQSS) show a composition bias toward gly residues. Fibronectin type-III domains are found at residues 787–878 (VPYP…AGAG), 880–972 (VPSQ…TLPA), and 977–1075 (APLD…PALA). Disordered regions lie at residues 1084–1107 (SCLS…GLGD), 1163–1219 (EPTL…LDSG), 1243–1302 (HSRN…SDEE), 1322–1476 (SIPE…PESS), 1492–1617 (YDSE…QDLP), 1704–1755 (LTEA…AAQK), and 1812–1846 (VPSN…RVQC). A compositionally biased stretch (basic and acidic residues) spans 1202-1219 (TQKKPSIEACHGGDLDSG). The span at 1251–1265 (DIQEEEEEEEEEEEE) shows a compositional bias: acidic residues. Residues 1270-1283 (PCSSQKQVAGNSIR) show a composition bias toward polar residues. The span at 1324 to 1335 (PEEEEEEEEEEG) shows a compositional bias: acidic residues. Basic and acidic residues-rich tracts occupy residues 1411 to 1420 (RPQDPREHCS) and 1545 to 1577 (AWEK…ESRG). The region spanning 1616 to 1684 (LPVRVFVALF…PCNMVAEVAV (69 aa)) is the SH3 2 domain. A compositionally biased stretch (polar residues) spans 1705 to 1719 (TEASGNGPSVYSSAH). One can recognise an SH3 3 domain in the interval 1755-1822 (KTSRPMVAAF…PSNFLEGPGP (68 aa)). A compositionally biased stretch (low complexity) spans 1817–1830 (LEGPGPESGSLESG).

Belongs to the RIMBP family. Interacts with RIMS1 and RIMS2. Interacts with TSPO. Interacts with CACNA1A. As to expression, predominantly expressed in the brain.

Its subcellular location is the cytoplasm. The protein localises to the mitochondrion. In terms of biological role, required for synaptic transmission regulation. It probably controls the recruitement of voltage-gated calcium channels to the presynaptic membrane, and modulates neurotransmitter release. This Mus musculus (Mouse) protein is Peripheral-type benzodiazepine receptor-associated protein 1.